We begin with the raw amino-acid sequence, 382 residues long: Gap junction alpha-1 protein (382 aa).

The Cytoplasmic segment spans residues 2–23 (GDWSALGKLLDKVQAYSTAGGK). Ser5 carries the phosphoserine modification. Residues 24–44 (VWLSVLFIFRILLLGTAVESA) form a helical membrane-spanning segment. The Extracellular portion of the chain corresponds to 45 to 76 (WGDEQSAFRCNTQQPGCENVCYDKSFPISHVR). Cystine bridges form between Cys54/Cys192 and Cys187/Cys198. A helical membrane pass occupies residues 77-97 (FWVLQIIFVSVPTLLYLAHVF). Residues 98–155 (YVMRKEEKLNKKEEELKVAQTDGVNVEMHLKQIEIKKFKYGIEEHGKVKMRGGLLRTY) are Cytoplasmic-facing. A Glycyl lysine isopeptide (Lys-Gly) (interchain with G-Cter in SUMO) cross-link involves residue Lys144. The chain crosses the membrane as a helical span at residues 156–176 (IISILFKSVFEVAFLLIQWYI). Residues 177–207 (YGFSLSAVYTCKRDPCPHQVDCFLSRPTEKT) lie on the Extracellular side of the membrane. A helical transmembrane segment spans residues 208 to 228 (IFIIFMLVVSLVSLALNIIEL). Residues 229–382 (FYVFFKGVKD…SRPRPDDLEI (154 aa)) are Cytoplasmic-facing. Residue Lys237 forms a Glycyl lysine isopeptide (Lys-Gly) (interchain with G-Cter in SUMO) linkage. The interaction with NOV stretch occupies residues 244 to 382 (SDPYHATTGP…SRPRPDDLEI (139 aa)). Tyr247 is subject to Phosphotyrosine. Phosphoserine is present on residues Ser255, Ser257, and Ser262. An interaction with UBQLN4 region spans residues 264-382 (KYAYFNGCSS…SRPRPDDLEI (119 aa)). Cys271 is subject to S-nitrosocysteine. The residue at position 275 (Thr275) is a Phosphothreonine. Residues Ser306 and Ser314 each carry the phosphoserine modification. Positions 317 to 332 (QNRMGQAGSTISNSHA) are enriched in polar residues. The disordered stretch occupies residues 317-382 (QNRMGQAGST…SRPRPDDLEI (66 aa)). Phosphoserine; by CK1 is present on Ser325. Thr326 carries the phosphothreonine modification. Phosphoserine; by CK1 is present on residues Ser328 and Ser330. 2 positions are modified to phosphoserine: Ser344 and Ser365. Over residues 362 to 374 (RPSSRASSRASSR) the composition is skewed to low complexity. Position 368 is a phosphoserine; by PKC/PRKCG and PKC/PRKCD (Ser368). A phosphoserine mark is found at Ser369 and Ser373.

This sequence belongs to the connexin family. Alpha-type (group II) subfamily. A connexon is composed of a hexamer of connexins. Interacts with SGSM3. Interacts with RIC1/CIP150. Interacts with CNST and CSNK1D. Interacts (via C-terminus) with TJP1. Interacts (via C-terminus) with SRC (via SH3 domain). Interacts (not ubiquitinated) with UBQLN4 (via UBA domain). Interacts with NOV. Interacts with TMEM65. Interacts with ANK3/ANKG and PKP2. In terms of processing, phosphorylation at Ser-325, Ser-328 and Ser-330 by CK1 modulates gap junction assembly. Phosphorylated at Ser-368 by PRKCG; phosphorylation induces disassembly of gap junction plaques and inhibition of gap junction activity. Phosphorylation at Ser-368 by PRKCD triggers its internalization into small vesicles leading to proteasome-mediated degradation. Sumoylated with SUMO1, SUMO2 and SUMO3, which may regulate the level of functional Cx43 gap junctions at the plasma membrane. May be desumoylated by SENP1 or SENP2. Post-translationally, S-nitrosylation at Cys-271 is enriched at the muscle endothelial gap junction in arteries, it augments channel permeability and may regulate of smooth muscle cell to endothelial cell communication. In terms of processing, acetylated in the developing cortex; leading to delocalization from the cell membrane.

The protein localises to the cell membrane. It localises to the cell junction. The protein resides in the gap junction. It is found in the endoplasmic reticulum. Functionally, gap junction protein that acts as a regulator of bladder capacity. A gap junction consists of a cluster of closely packed pairs of transmembrane channels, the connexons, through which materials of low MW diffuse from one cell to a neighboring cell. May play a critical role in the physiology of hearing by participating in the recycling of potassium to the cochlear endolymph. Negative regulator of bladder functional capacity: acts by enhancing intercellular electrical and chemical transmission, thus sensitizing bladder muscles to cholinergic neural stimuli and causing them to contract. May play a role in cell growth inhibition through the regulation of NOV expression and localization. Plays an essential role in gap junction communication in the ventricles. This is Gap junction alpha-1 protein (GJA1) from Oryctolagus cuniculus (Rabbit).